Consider the following 145-residue polypeptide: MRTTYMAKPNEVERKWYVVDAAGKTLGRLASEVAALLRGKHKPTFTPHVDCGDHVIVINADKVELTGKKLTKKLYYRHSLHPGGLKVRTALEMRTNYPEQMIERAVRGMLPKGSLGRQMFKKLHVYRGSEHPHQAQKPEVYELRG.

This sequence belongs to the universal ribosomal protein uL13 family. Part of the 50S ribosomal subunit.

In terms of biological role, this protein is one of the early assembly proteins of the 50S ribosomal subunit, although it is not seen to bind rRNA by itself. It is important during the early stages of 50S assembly. The sequence is that of Large ribosomal subunit protein uL13 from Geobacillus thermodenitrificans (strain NG80-2).